We begin with the raw amino-acid sequence, 516 residues long: Prolyl 4-hydroxylase subunit alpha-1 (516 aa).

Residue N97 is glycosylated (N-linked (GlcNAc...) asparagine). One copy of the TPR repeat lies at 189–222 (VYILDYLSYAVYQQGDLSKAMMLTKRLLELDPEH). An N-linked (GlcNAc...) asparagine glycan is attached at N243. Residues 393–501 (TAEELQVANY…KWVSNKWLHE (109 aa)) enclose the Fe2OG dioxygenase domain. Residues H411, D413, and H482 each contribute to the Fe cation site. K492 contributes to the 2-oxoglutarate binding site.

The protein belongs to the P4HA family. Heterotetramer of two alpha chains and two beta chains (the beta chain is the multi-functional PDI). Fe(2+) is required as a cofactor. L-ascorbate serves as cofactor.

Its subcellular location is the endoplasmic reticulum lumen. It catalyses the reaction L-prolyl-[collagen] + 2-oxoglutarate + O2 = trans-4-hydroxy-L-prolyl-[collagen] + succinate + CO2. Functionally, catalyzes the post-translational formation of 4-hydroxyproline in -Xaa-Pro-Gly- sequences in collagens and other proteins. This is Prolyl 4-hydroxylase subunit alpha-1 (P4HA1) from Gallus gallus (Chicken).